The following is a 114-amino-acid chain: Small nuclear ribonucleoprotein SmD1a (114 aa).

The region spanning 2–74 (KLVRFLMKLN…IRYYILPDSL (73 aa)) is the Sm domain. Residues 87 to 114 (VKPKKPVAGKAVGRGRGRGRGRGRGRGR) form a disordered region. 8 tandem repeats follow at residues 99 to 100 (GR), 101 to 102 (GR), 103 to 104 (GR), 105 to 106 (GR), 107 to 108 (GR), 109 to 110 (GR), 111 to 112 (GR), and 113 to 114 (GR). The tract at residues 99 to 114 (GRGRGRGRGRGRGRGR) is 8 X 2 AA tandem repeats of G-R.

The protein belongs to the snRNP core protein family.

It localises to the nucleus. It is found in the nucleus speckle. Its subcellular location is the nucleolus. Functionally, involved in splicing regulation. Facilitates post-transcriptional gene silencing (PTGS) by limiting the degradation of transgene aberrant RNAs by the RNA quality control (RQC) machinery, thus favoring their entry into cytoplasmic siRNA bodies where they can trigger PTGS. Does not participate in the production of small RNAs. This is Small nuclear ribonucleoprotein SmD1a from Arabidopsis thaliana (Mouse-ear cress).